The chain runs to 35 residues: N-acylglucosamine 2-epimerase (35 aa).

The interval 1-21 is leucine-zipper; sequence LNLVDQLGEADEELAGTYAEL.

Belongs to the N-acylglucosamine 2-epimerase family. Homodimer. Forms a heterodimer with renin and inhibits its activity.

It carries out the reaction an N-acyl-D-glucosamine = an N-acyl-D-mannosamine. Its pathway is amino-sugar metabolism; N-acetylneuraminate degradation. Functionally, catalyzes the interconversion of N-acetylglucosamine to N-acetylmannosamine. Involved in the N-glycolylneuraminic acid (Neu5Gc) degradation pathway. The chain is N-acylglucosamine 2-epimerase from Canis lupus familiaris (Dog).